The following is a 439-amino-acid chain: Xylose isomerase (439 aa).

Active-site residues include His-101 and Asp-104. Residues Glu-232, Glu-268, His-271, Asp-296, Asp-307, Asp-309, and Asp-339 each contribute to the Mg(2+) site.

This sequence belongs to the xylose isomerase family. As to quaternary structure, homotetramer. Mg(2+) is required as a cofactor.

It localises to the cytoplasm. The catalysed reaction is alpha-D-xylose = alpha-D-xylulofuranose. This chain is Xylose isomerase, found in Serratia proteamaculans (strain 568).